The sequence spans 83 residues: BmKBT-like peptide (83 aa).

The signal sequence occupies residues 1–19; sequence MKAALLLVISTLMLIGVLT. The 61-residue stretch at 21–81 folds into the LCN-type CS-alpha/beta domain; sequence KSGYPIQHDG…TWSRETNKCR (61 aa). 4 disulfides stabilise this stretch: C31-C80, C35-C54, C41-C61, and C45-C63. K83 is a propeptide (removed by a carboxypeptidase).

Belongs to the long (4 C-C) scorpion toxin superfamily. Sodium channel inhibitor family. Beta subfamily. In terms of tissue distribution, expressed by the venom gland.

The protein localises to the secreted. Sodium channel inhibitor. Possesses potent toxicity in mice but induces only paralysis in cotton bollworm. This is BmKBT-like peptide from Olivierus martensii (Manchurian scorpion).